The following is a 784-amino-acid chain: MKKRIPTLLATMIATALYSQQGLAADLASQCMLGVPSYDRPLVQGDTNDLPVTINADHAKGDYPDDAVFTGSVDIMQGNSRLQADEVQLHQKEAPGQPEPVRTVDALGNVHYDDNQVILKGPKGWANLNTKDTNVWEGDYQMVGRQGRGKADLMKQRGENRYTILDNGSFTSCLPGSDTWSVVGSEIIHDREEQVAEIWNARFKVGPVPIFYSPYLQLPVGDKRRSGFLIPNAKYTTTNYFEFYLPYYWNIAPNMDATITPHYMHRRGNIMWENEFRYLSQAGAGLMELDYLPSDKVYKDEHPNDDSSRRWLFYWNHSGVMDQVWRFNVDYTKVSDPSYFNDFDNKYGSSTDGYATQKFSVGYAVQNFNATVSTKQFQVFSEQNTSSYSAEPQLDVNYYQNDVGPFDTRIYGQAVHFVNTRDDMPEATRVHLEPTINLPLSNNWGSINTEAKLLATHYQQTNLDWYNSRNTTRLAESANRVMPQFKVDGRMVFERDMEMLAPGYTQTLEPRAQYLYVPYRDQSKIYNYDSSLLQSDYSGLFRDRTYGGLDRIASANQVTTGVTSRIYDDAAVERFNISVGQIYYFTESRTGDDNITWENDDKTGSLVWAGDTYWRISDRWGLRGGIQYDTRLDNVATSNSSIEYRRDEDRLVQLNYRYASPEYIQATLPKYYSTAEQYKNGISQVGAVASWPIADRWSIVGAYYYDTNANKQADSMLGVQYSSCCYAIRVGYERKLNGWDNDKQHAVYDNAIGFNIELRGLSSNYGLGTQEMLRSNILPYQNTL.

The N-terminal stretch at 1-24 is a signal peptide; sequence MKKRIPTLLATMIATALYSQQGLA. 2 disulfide bridges follow: C31–C724 and C173–C725.

Belongs to the LptD family. Component of the lipopolysaccharide transport and assembly complex. Interacts with LptE and LptA. Contains two intramolecular disulfide bonds.

The protein resides in the cell outer membrane. Its function is as follows. Together with LptE, is involved in the assembly of lipopolysaccharide (LPS) at the surface of the outer membrane. The chain is LPS-assembly protein LptD from Escherichia coli O6:K15:H31 (strain 536 / UPEC).